Reading from the N-terminus, the 1422-residue chain is MQGNKKCADGFSDTSSIGSVLDEADREVSNLTDRAFRSLCISEDTSFHDSDLALSPEITSQVSGTFHQETVSHANRKSGIWSQLPSQGTEHSGWAATFQQQPKYVQGEEKYPKNSPLPTPVQRRLEVPISGLRSSSKPISKVSSLIRSFDRTEAQPCDSRPPPSKPPALKNTPKFAHPPESGVNFCFDSAFLTVRRVPAGVSSTHQSSHQPCRAPGEPEPPTNPEIACHSSDSLLRAPDRVAGSCEPRFPSPSLKPPKAETGRGKEWISRGTFLHSENSAFESWDAHQPKLRERKDITETTPESKAPKHYEDMPLLKEPYPAESKLSPCQGRANCAQEENRSPSGIQSTSGAWGARDSGSQVFPVEGNASQIDPQVKRNQAPWRKPKTGKGGTDGPHDASEDKKQPNRKGLPLYSKLNPQGQLPENGVLDLPEESSDHYSSPFNISKLLTPIISTKHVLETSDTQPVETSPSPPGQLNGYQEKESSEAQSRDSYKSKAPSLLFNLKDVRKRVKSTYSPLPLLKGFDEKTRGKLDGKQEPLSNGVTLPNGLEENPPTAELVKETLDDAPSVLHSSTQKDPAMDSRESFADSHPTFSSPSASSKTHFSINGEAAERNSHEKEEANGESEQGLSEGGWHPDSRENLPRKHLSLKLCNRDSETGQATEKMKPRQLEKRLSRSISQETEPEREMGFQNLPVSQKFSPGPLSPEEEDVFYSDSQSDFTPCVQTKAKFSTSSSDQSFASFEDQQKMWFTEGPREDGKSHVSLGDNQKDEKETEVEKEEPQQCALHNGVEEHRQKETQRKAQGVLGGRPRKASAEEVSVRGSWTGADKDTALSHAKDPTPLPASTNKHRLFPIKDNTLRATPVIKPIILPLLRTVSSEDSLSGGHKENELPRQPWGEDAGGLGASESQEMRNTPLSNSTPSTEQKCVVYEGVEEDPVHTAAQDETSQQTRKGSFSFLPLVEEGGKTKPPPDTADERLAHEKSRSADSGKLEAPQHIPTIALHSDDLEDSPPSLPQHTCWEEQGFKSHFLSAPRAGPSGRRPVPSEAATSPNPSSLGGSSTCSPAASSIWEDASQAAGEHWQRQEPPGPGPWASPGPSGPTGLTRREDMTRGLTWEAEGSDPHLERLADFRTLSPRGIFLTGAAEKPEPSSLLEKAAGKPPAVPPKTEKALRRAKKLASKRRKSDQMSEKHTEAWEGKSFTEDAQGTEQRPVSPGKGPRPRFPEVRSLPPPTHRHSVSCGWEPAGRRPWGSQSLIPLPPYPATQKVLQDPQSGQYFVFDMPLQVKIKTFYDPETGKYVKVSVPSSEEDPSEPPLQDALTAPYLLYPGFQPVPVTSLMPLRCSSQLAAPTFLRQGSSHRPQSSQGARLQPPPERLGESAQHVSSAQRPRGPPLSPEEEGAEAPSLSIISTDDLEDFATEGVS.

The disordered stretch occupies residues 1 to 23 (MQGNKKCADGFSDTSSIGSVLDE). Residue T119 is modified to Phosphothreonine. Disordered regions lie at residues 151 to 177 (RTEA…KFAH), 199 to 265 (AGVS…GRGK), 279 to 443 (SAFE…SSPF), 459 to 500 (LETS…KAPS), 516 to 718 (YSPL…SDSQ), 731 to 850 (FSTS…TNKH), 877 to 1127 (VSSE…HLER), 1142 to 1244 (TGAA…GWEP), and 1353 to 1422 (RQGS…EGVS). Over residues 201-210 (VSSTHQSSHQ) the composition is skewed to polar residues. Composition is skewed to basic and acidic residues over residues 284–298 (WDAH…KDIT) and 305–315 (KAPKHYEDMPL). A Phosphoserine modification is found at S327. Residues 342-351 (SPSGIQSTSG) are compositionally biased toward polar residues. Basic and acidic residues predominate over residues 395-405 (GPHDASEDKKQ). The span at 461 to 470 (TSDTQPVETS) shows a compositional bias: polar residues. S472 is modified (phosphoserine). Composition is skewed to basic and acidic residues over residues 481–495 (QEKE…DSYK), 524–537 (GFDE…DGKQ), and 579–588 (PAMDSRESFA). The segment covering 590 to 606 (SHPTFSSPSASSKTHFS) has biased composition (low complexity). 3 stretches are compositionally biased toward basic and acidic residues: residues 611–622 (AAERNSHEKEEA), 635–644 (WHPDSRENLP), and 653–675 (CNRD…EKRL). Positions 731–744 (FSTSSSDQSFASFE) are enriched in low complexity. Residues 790–801 (GVEEHRQKETQR) show a composition bias toward basic and acidic residues. S815 bears the Phosphoserine mark. Basic and acidic residues predominate over residues 828-839 (ADKDTALSHAKD). 2 stretches are compositionally biased toward polar residues: residues 907–926 (SESQ…STEQ) and 944–954 (QDETSQQTRKG). Basic and acidic residues predominate over residues 975–991 (ADERLAHEKSRSADSGK). Residues 1048 to 1067 (AATSPNPSSLGGSSTCSPAA) show a composition bias toward polar residues. Residues 1087–1099 (PPGPGPWASPGPS) are compositionally biased toward pro residues. A compositionally biased stretch (basic residues) spans 1173 to 1184 (RRAKKLASKRRK). Basic and acidic residues predominate over residues 1185 to 1202 (SDQMSEKHTEAWEGKSFT). Residues 1353 to 1366 (RQGSSHRPQSSQGA) show a composition bias toward polar residues. The span at 1411–1422 (DDLEDFATEGVS) shows a compositional bias: acidic residues.

Interacts with FHL2.

Its subcellular location is the cytoplasm. The protein resides in the myofibril. It is found in the sarcomere. The protein localises to the z line. In terms of biological role, plays an important role in cardiomyocyte hypertrophy via activation of the calcineurin/NFAT signaling pathway. The polypeptide is Cardiac-enriched FHL2-interacting protein (Rattus norvegicus (Rat)).